The chain runs to 539 residues: Glucose-6-phosphate isomerase (539 aa).

Glutamate 349 serves as the catalytic Proton donor. Active-site residues include histidine 380 and lysine 508. The tract at residues 519-539 is disordered; sequence ESGASGQHDPSTAGLIQRLKR.

This sequence belongs to the GPI family.

Its subcellular location is the cytoplasm. The enzyme catalyses alpha-D-glucose 6-phosphate = beta-D-fructose 6-phosphate. It functions in the pathway carbohydrate biosynthesis; gluconeogenesis. It participates in carbohydrate degradation; glycolysis; D-glyceraldehyde 3-phosphate and glycerone phosphate from D-glucose: step 2/4. Its function is as follows. Catalyzes the reversible isomerization of glucose-6-phosphate to fructose-6-phosphate. The sequence is that of Glucose-6-phosphate isomerase from Caulobacter vibrioides (strain ATCC 19089 / CIP 103742 / CB 15) (Caulobacter crescentus).